Reading from the N-terminus, the 161-residue chain is UPF0178 protein BSUIS_A1819 (161 aa).

It belongs to the UPF0178 family.

This Brucella suis (strain ATCC 23445 / NCTC 10510) protein is UPF0178 protein BSUIS_A1819.